The primary structure comprises 516 residues: Calcitonin receptor (516 aa).

An N-terminal signal peptide occupies residues 1-24 (MRFLLLNRFTLLLLLLVSPTPVLQ). Residues 25 to 146 (APTNLTDSGL…FTPDKLHNAY (122 aa)) lie on the Extracellular side of the membrane. N-linked (GlcNAc...) asparagine glycosylation is found at N28, N73, N125, and N130. 3 cysteine pairs are disulfide-bonded: C55–C81, C72–C112, and C95–C134. The helical transmembrane segment at 147–169 (VLYYLALVGHSMSIAALIASMGI) threads the bilayer. The Cytoplasmic portion of the chain corresponds to 170–181 (FLFFKNLSCQRV). The helical transmembrane segment at 182–202 (TLHKNMFLTYILNSIIIIIHL) threads the bilayer. Topologically, residues 203-256 (VEVVPNGDLVRRDPMHIFHHNTYMWTMQWELSPPLPLSAHEGKMDPHDSEVISC) are extracellular. An intrachain disulfide couples C256 to C326. The helical transmembrane segment at 257 to 279 (KILHFFHQYMMACNYFWMLCEGI) threads the bilayer. At 280–296 (YLHTLIVMAVFTEDQRL) the chain is on the cytoplasmic side. A helical transmembrane segment spans residues 297–317 (RWYYLLGWGFPIVPTIIHAIT). Over 318-333 (RAVYYNDNCWLSTETH) the chain is Extracellular. The helical transmembrane segment at 334 to 357 (LLYIIHGPVMAALVVNFFFLLNIV) threads the bilayer. Over 358–377 (RVLVTKMRQTHEAEAYMYLK) the chain is Cytoplasmic. The helical transmembrane segment at 378–396 (AVKATMVLVPLLGIQFVVF) threads the bilayer. Residues 397 to 404 (PWRPSNKV) lie on the Extracellular side of the membrane. The chain crosses the membrane as a helical span at residues 405 to 431 (LGKIYDYLMHSLIHFQGFFVATIYCFC). Topologically, residues 432–516 (NHEVQVTLKR…MNVIQQDSSA (85 aa)) are cytoplasmic. The disordered stretch occupies residues 489–516 (RNPPVSNNEGEEGTEMIPMNVIQQDSSA).

The protein belongs to the G-protein coupled receptor 2 family. Heterodimer of CALCR and RAMP1, RAMP2 or RAMP3; the receptor complexes function as AMYR1, AMYR2 and AMYR3 receptors, respectively, and respond to amylin/IAPP, calcitonin/CT and CGRP1 ligands. Interacts with GPRASP2.

The protein resides in the cell membrane. G protein-coupled receptor activated by ligand peptides amylin (IAPP), calcitonin (CT/CALCA) and calcitonin gene-related peptide type 1 (CGRP1/CALCA). CALCR interacts with receptor-activity-modifying proteins RAMP1, 2 and 3 to form receptor complexes AMYR1, 2 and 3, respectively. IAPP, CT and CGRP1 activate CALCR and AMYRs with distinct modes of receptor activation resulting in specific phenotypes. Ligand binding causes a conformation change that triggers signaling via guanine nucleotide-binding proteins (G proteins) and modulates the activity of downstream effectors. Activates cAMP-dependent pathway. The protein is Calcitonin receptor of Rattus norvegicus (Rat).